A 397-amino-acid chain; its full sequence is Purine ribonucleoside efflux pump NepI (397 aa).

The Cytoplasmic segment spans residues 1–21; sequence MNENIAEKFRADGVARPNWSA. Residues 22-42 traverse the membrane as a helical segment; sequence VFAVAFCVACLITVEFLPVSL. Topologically, residues 43–54 are periplasmic; sequence LTPMAQDLGISE. The helical transmembrane segment at 55 to 75 threads the bilayer; that stretch reads GIAGQSVTVTAFVAMFSSLFI. Residues 76 to 85 lie on the Cytoplasmic side of the membrane; the sequence is TQIIQATDRR. The helical transmembrane segment at 86-106 threads the bilayer; that stretch reads YIVILFAVLLTASCLMVSFAN. Position 107 (serine 107) is a topological domain, periplasmic. The chain crosses the membrane as a helical span at residues 108–128; the sequence is FTLLLLGRACLGLALGGFWAM. The Cytoplasmic segment spans residues 129–147; sequence SASLTMRLVPARTVPKALS. Residues 148–168 traverse the membrane as a helical segment; the sequence is VIFGAVSIALVIAAPLGSFLG. The Periplasmic segment spans residues 169–175; it reads GIIGWRN. A helical membrane pass occupies residues 176–196; the sequence is VFNAAAVMGVLCVIWVVKSLP. At 197 to 215 the chain is on the cytoplasmic side; that stretch reads SLPGEPSHQKQNMFSLLQR. The helical transmembrane segment at 216-236 threads the bilayer; that stretch reads PGVMAGMIAIFMSFAGQFAFF. The Periplasmic segment spans residues 237–255; the sequence is TYIRPVYMNLAGFDVDGLT. A helical transmembrane segment spans residues 256–276; sequence LVLLSFGIASFVGTSFSSYVL. Topologically, residues 277–281 are cytoplasmic; it reads KRSVK. Residues 282–302 traverse the membrane as a helical segment; it reads LALAGAPLLLALSALTLIVWG. The Periplasmic segment spans residues 303–305; the sequence is SDK. Residues 306-326 form a helical membrane-spanning segment; the sequence is TVAAVIAIIWGLAFALVPVGW. The Cytoplasmic portion of the chain corresponds to 327–343; it reads STWITRSLADQAEKAGS. A helical transmembrane segment spans residues 344–364; that stretch reads IQVAVIQLANTCGAAVGGYAL. At 365 to 366 the chain is on the periplasmic side; that stretch reads DN. The helical transmembrane segment at 367-387 threads the bilayer; it reads FGLLSPLALSGCLMLLTALVV. At 388–397 the chain is on the cytoplasmic side; the sequence is AAKVRITPMS.

This sequence belongs to the major facilitator superfamily. DHA1 family. NepI (TC 2.A.1.2.26) subfamily.

It localises to the cell inner membrane. The catalysed reaction is inosine(in) + H(+)(out) = inosine(out) + H(+)(in). It catalyses the reaction guanosine(in) + H(+)(out) = guanosine(out) + H(+)(in). Its function is as follows. Involved in the efflux of purine ribonucleosides, such as inosine and guanosine. In Salmonella enteritidis PT4 (strain P125109), this protein is Purine ribonucleoside efflux pump NepI.